The following is a 585-amino-acid chain: Arginine--tRNA ligase (585 aa).

The 'HIGH' region signature appears at 131-141; the sequence is ANPTGPMHVGH.

The protein belongs to the class-I aminoacyl-tRNA synthetase family. Monomer.

It localises to the cytoplasm. It catalyses the reaction tRNA(Arg) + L-arginine + ATP = L-arginyl-tRNA(Arg) + AMP + diphosphate. The chain is Arginine--tRNA ligase from Brucella canis (strain ATCC 23365 / NCTC 10854 / RM-666).